Consider the following 66-residue polypeptide: Large ribosomal subunit protein bL35 (66 aa).

Belongs to the bacterial ribosomal protein bL35 family.

The polypeptide is Large ribosomal subunit protein bL35 (Neorickettsia sennetsu (strain ATCC VR-367 / Miyayama) (Ehrlichia sennetsu)).